The sequence spans 122 residues: Acidic phospholipase A2 CTs-A3 (122 aa).

7 cysteine pairs are disulfide-bonded: Cys-26-Cys-116, Cys-28-Cys-44, Cys-43-Cys-95, Cys-49-Cys-122, Cys-50-Cys-88, Cys-57-Cys-81, and Cys-75-Cys-86. 3 residues coordinate Ca(2+): Tyr-27, Gly-29, and Gly-31. Residue His-47 is part of the active site. Asp-48 provides a ligand contact to Ca(2+). Asp-89 is an active-site residue.

Ca(2+) serves as cofactor. As to expression, expressed by the venom gland.

Its subcellular location is the secreted. The catalysed reaction is a 1,2-diacyl-sn-glycero-3-phosphocholine + H2O = a 1-acyl-sn-glycero-3-phosphocholine + a fatty acid + H(+). Snake venom phospholipase A2 (PLA2) that shows a moderate inhibition of ADP-induced human platelet aggregation when tested on platelet rich plasma. Exhibits moderate hydrolytic activities and prefers the anionic micelles (dPPC with deoxycholate) to the zwitterionic micelles (dPPC with Triton X-100). PLA2 catalyzes the calcium-dependent hydrolysis of the 2-acyl groups in 3-sn-phosphoglycerides. This is Acidic phospholipase A2 CTs-A3 from Trimeresurus stejnegeri (Chinese green tree viper).